A 552-amino-acid polypeptide reads, in one-letter code: Hydroxylamine reductase (552 aa).

[2Fe-2S] cluster contacts are provided by C5, C8, C20, and C27. Residues H251, E275, C319, C407, C435, C460, E494, and K496 each coordinate hybrid [4Fe-2O-2S] cluster. Cysteine persulfide is present on C407.

It belongs to the HCP family. [2Fe-2S] cluster is required as a cofactor. The cofactor is hybrid [4Fe-2O-2S] cluster.

The protein resides in the cytoplasm. It carries out the reaction A + NH4(+) + H2O = hydroxylamine + AH2 + H(+). Functionally, catalyzes the reduction of hydroxylamine to form NH(3) and H(2)O. The sequence is that of Hydroxylamine reductase from Shigella sonnei (strain Ss046).